Reading from the N-terminus, the 349-residue chain is 4-hydroxy-3-methylbut-2-en-1-yl diphosphate synthase (flavodoxin) (349 aa).

Residues C265, C268, C300, and E307 each contribute to the [4Fe-4S] cluster site.

Belongs to the IspG family. Requires [4Fe-4S] cluster as cofactor.

The catalysed reaction is (2E)-4-hydroxy-3-methylbut-2-enyl diphosphate + oxidized [flavodoxin] + H2O + 2 H(+) = 2-C-methyl-D-erythritol 2,4-cyclic diphosphate + reduced [flavodoxin]. The protein operates within isoprenoid biosynthesis; isopentenyl diphosphate biosynthesis via DXP pathway; isopentenyl diphosphate from 1-deoxy-D-xylulose 5-phosphate: step 5/6. Converts 2C-methyl-D-erythritol 2,4-cyclodiphosphate (ME-2,4cPP) into 1-hydroxy-2-methyl-2-(E)-butenyl 4-diphosphate. The chain is 4-hydroxy-3-methylbut-2-en-1-yl diphosphate synthase (flavodoxin) from Thermodesulfovibrio yellowstonii (strain ATCC 51303 / DSM 11347 / YP87).